A 140-amino-acid chain; its full sequence is Nucleoside diphosphate kinase (140 aa).

6 residues coordinate ATP: Lys-10, Phe-58, Arg-86, Thr-92, Arg-103, and Asn-113. His-116 functions as the Pros-phosphohistidine intermediate in the catalytic mechanism.

It belongs to the NDK family. As to quaternary structure, homotetramer. Requires Mg(2+) as cofactor.

It is found in the cytoplasm. The catalysed reaction is a 2'-deoxyribonucleoside 5'-diphosphate + ATP = a 2'-deoxyribonucleoside 5'-triphosphate + ADP. It catalyses the reaction a ribonucleoside 5'-diphosphate + ATP = a ribonucleoside 5'-triphosphate + ADP. Functionally, major role in the synthesis of nucleoside triphosphates other than ATP. The ATP gamma phosphate is transferred to the NDP beta phosphate via a ping-pong mechanism, using a phosphorylated active-site intermediate. The sequence is that of Nucleoside diphosphate kinase from Anaplasma phagocytophilum (strain HZ).